Reading from the N-terminus, the 167-residue chain is Cytochrome c-type biogenesis protein CcmE (167 aa).

Residues M1–R7 are Cytoplasmic-facing. The helical; Signal-anchor for type II membrane protein transmembrane segment at L8–A28 threads the bilayer. The Periplasmic portion of the chain corresponds to F29–G167. The heme site is built by H125 and Y129. A compositionally biased stretch (basic and acidic residues) spans T141–K150. Residues T141–G167 form a disordered region.

It belongs to the CcmE/CycJ family.

It localises to the cell inner membrane. Heme chaperone required for the biogenesis of c-type cytochromes. Transiently binds heme delivered by CcmC and transfers the heme to apo-cytochromes in a process facilitated by CcmF and CcmH. This Gluconobacter oxydans (strain 621H) (Gluconobacter suboxydans) protein is Cytochrome c-type biogenesis protein CcmE.